A 477-amino-acid polypeptide reads, in one-letter code: Cysteine--tRNA ligase (477 aa).

Cys29 contacts Zn(2+). The 'HIGH' region motif lies at 31–41; that stretch reads PTVQASPHIGH. Positions 219, 244, and 248 each coordinate Zn(2+). Positions 275-279 match the 'KMSKS' region motif; sequence KMSKS. Lys278 lines the ATP pocket.

It belongs to the class-I aminoacyl-tRNA synthetase family. In terms of assembly, monomer. Zn(2+) serves as cofactor.

It localises to the cytoplasm. The enzyme catalyses tRNA(Cys) + L-cysteine + ATP = L-cysteinyl-tRNA(Cys) + AMP + diphosphate. This Leifsonia xyli subsp. xyli (strain CTCB07) protein is Cysteine--tRNA ligase.